Consider the following 239-residue polypeptide: Sugar fermentation stimulation protein homolog (239 aa).

It belongs to the SfsA family.

This Agrobacterium fabrum (strain C58 / ATCC 33970) (Agrobacterium tumefaciens (strain C58)) protein is Sugar fermentation stimulation protein homolog.